The following is a 298-amino-acid chain: Protease HtpX homolog (298 aa).

2 consecutive transmembrane segments (helical) span residues 15–35 and 38–58; these read LIMV…GYLF and SPWT…LIMW. Residue His-143 coordinates Zn(2+). The active site involves Glu-144. Residue His-147 coordinates Zn(2+). Transmembrane regions (helical) follow at residues 153 to 173 and 197 to 217; these read ILLS…SGIA and IIFK…SASL. Glu-227 contributes to the Zn(2+) binding site.

The protein belongs to the peptidase M48B family. Requires Zn(2+) as cofactor.

It localises to the cell membrane. The protein is Protease HtpX homolog of Lactobacillus acidophilus (strain ATCC 700396 / NCK56 / N2 / NCFM).